We begin with the raw amino-acid sequence, 1712 residues long: Probable ATP-dependent RNA helicase DDX60 (1712 aa).

The Helicase ATP-binding domain maps to 772 to 939 (LDVVDKNESA…WLQSVKWYWK (168 aa)). Residue 785–792 (APTSSGKT) coordinates ATP. A DEVH box motif is present at residues 889–892 (DEVH). Positions 1226-1370 (YADQKAVDTE…HFPLSITLVL (145 aa)) constitute a Helicase C-terminal domain.

It belongs to the helicase family. As to quaternary structure, interacts with EXOSC1, EXOSC4, RIGI, IFIH1/MDA5 and DHX58/LGP2. As to expression, brain, lymph node, prostate, stomach, thyroid, tongue, trachea, uterus, skeletal muscle, spleen, kidney, liver and small intestine.

The protein resides in the cytoplasm. It carries out the reaction ATP + H2O = ADP + phosphate + H(+). Its function is as follows. Positively regulates RIGI- and IFIH1/MDA5-dependent type I interferon and interferon inducible gene expression in response to viral infection. Binds ssRNA, dsRNA and dsDNA and can promote the binding of RIGI to dsRNA. Exhibits antiviral activity against hepatitis C virus and vesicular stomatitis virus (VSV). The protein is Probable ATP-dependent RNA helicase DDX60 (DDX60) of Homo sapiens (Human).